We begin with the raw amino-acid sequence, 567 residues long: uncharacterized protein (567 aa).

The segment at 1-26 (MPSEKATTRHLPGAVETLSPRTGRRP) is disordered. Transmembrane regions (helical) follow at residues 57-77 (AILV…TVAF), 90-110 (VSFG…TYWL), 142-162 (VALA…IIYG), 173-193 (LFSM…LTEF), 221-241 (MLVW…TAIF), and 257-277 (VLIL…ILAW). Positions 278–329 (LTATPVRVVREALNRVEQGDLSGDLVVFDGTELGELQRGFNRMVEGLRERER) constitute an HAMP domain. A Guanylate cyclase domain is found at 361–485 (AVVFVDIVGS…EPVNEAARLC (125 aa)).

The protein belongs to the adenylyl cyclase class-3 family.

It is found in the cell membrane. This is an uncharacterized protein from Mycobacterium tuberculosis (strain ATCC 25618 / H37Rv).